The sequence spans 400 residues: MIIKPRVRGFICVTTHPVGCEANVKEQIDYVTSHGPIANGPKKVLVIGASTGYGLAARISAAFGSGADTLGVFFERAGGETKPGTAGWYNSAAFEKFAAEKGRYARSINGDAFSDKVKQVTIDTIKQDLGKVDLVVYSLAAPRRTHPKTGETISSTLKPVGKAVTFRGLDTDKEVIREVSLEPATQEEIDGTVAVMGGEDWQMWIDALDEAGVLADGAKTTAFTYLGEQITHDIYWNGSIGEAKKDLDKKVLSIRDKLAAHGGDARVSVLKAVVTQASSAIPMMPLYLSLLFKVMKEQGTHEGCIEQVYGLLKDSLYGATPHVDEEGRLRADYKELDPQVQGKVVAMWDKVTNENLYEMTDFAGYKTEFLRLFGFEIAGVDYDADVNPDVKIPGIIDTTV.

NAD(+) is bound by residues 48–53, 74–75, 111–112, and 139–140; these read GASTGY, FE, DA, and LA. A substrate-binding site is contributed by Tyr225. Tyr235 serves as the catalytic Proton donor. Residues Lys244 and 273–275 each bind NAD(+); that span reads VVT.

The protein belongs to the TER reductase family. Monomer.

It carries out the reaction a 2,3-saturated acyl-[ACP] + NAD(+) = a (2E)-enoyl-[ACP] + NADH + H(+). The protein operates within lipid metabolism; fatty acid biosynthesis. Involved in the final reduction of the elongation cycle of fatty acid synthesis (FAS II). Catalyzes the reduction of a carbon-carbon double bond in an enoyl moiety that is covalently linked to an acyl carrier protein (ACP). The chain is Enoyl-[acyl-carrier-protein] reductase [NADH] from Burkholderia ambifaria (strain MC40-6).